Reading from the N-terminus, the 120-residue chain is MPRVKNAVVARKRHKKVLKLAKGYWGAKSKLYRVANQQVMRSLLYAYRDRRAKKRDFRRLWITRINAAARLNGMSYNRFIEGLRRAGVEINRKVLAELAVKDQAAFGQLVQVAKAQLESK.

This sequence belongs to the bacterial ribosomal protein bL20 family.

Its function is as follows. Binds directly to 23S ribosomal RNA and is necessary for the in vitro assembly process of the 50S ribosomal subunit. It is not involved in the protein synthesizing functions of that subunit. This Desulforudis audaxviator (strain MP104C) protein is Large ribosomal subunit protein bL20.